The chain runs to 393 residues: NAD(P)H-quinone oxidoreductase subunit H, chloroplastic (393 aa).

Belongs to the complex I 49 kDa subunit family. As to quaternary structure, NDH is composed of at least 16 different subunits, 5 of which are encoded in the nucleus.

Its subcellular location is the plastid. It is found in the chloroplast thylakoid membrane. It carries out the reaction a plastoquinone + NADH + (n+1) H(+)(in) = a plastoquinol + NAD(+) + n H(+)(out). The catalysed reaction is a plastoquinone + NADPH + (n+1) H(+)(in) = a plastoquinol + NADP(+) + n H(+)(out). NDH shuttles electrons from NAD(P)H:plastoquinone, via FMN and iron-sulfur (Fe-S) centers, to quinones in the photosynthetic chain and possibly in a chloroplast respiratory chain. The immediate electron acceptor for the enzyme in this species is believed to be plastoquinone. Couples the redox reaction to proton translocation, and thus conserves the redox energy in a proton gradient. The polypeptide is NAD(P)H-quinone oxidoreductase subunit H, chloroplastic (Oenothera argillicola (Appalachian evening primrose)).